The sequence spans 739 residues: NAD(P)H-quinone oxidoreductase subunit 5, chloroplastic (739 aa).

16 helical membrane-spanning segments follow: residues 9–29 (WVIP…LFFI), 39–59 (IWAF…VQLS), 89–109 (IDPL…LVLI), 125–145 (FVYI…SNLI), 147–167 (IYFF…FWFT), 185–205 (GDFG…SLEF), 219–239 (NGIN…GAVA), 258–278 (TPIS…FLLA), 280–300 (LLPL…VGTI), 327–347 (LGYM…FHLI), 354–374 (ALLF…VGYS), 396–416 (STFL…CFWS), 425–445 (WLYS…TAFY), 542–562 (LFPL…GISF), 610–630 (SLAI…YSFF), and 719–739 (ISSY…FFLF).

Belongs to the complex I subunit 5 family. NDH is composed of at least 16 different subunits, 5 of which are encoded in the nucleus.

It localises to the plastid. It is found in the chloroplast thylakoid membrane. The enzyme catalyses a plastoquinone + NADH + (n+1) H(+)(in) = a plastoquinol + NAD(+) + n H(+)(out). It carries out the reaction a plastoquinone + NADPH + (n+1) H(+)(in) = a plastoquinol + NADP(+) + n H(+)(out). In terms of biological role, NDH shuttles electrons from NAD(P)H:plastoquinone, via FMN and iron-sulfur (Fe-S) centers, to quinones in the photosynthetic chain and possibly in a chloroplast respiratory chain. The immediate electron acceptor for the enzyme in this species is believed to be plastoquinone. Couples the redox reaction to proton translocation, and thus conserves the redox energy in a proton gradient. The polypeptide is NAD(P)H-quinone oxidoreductase subunit 5, chloroplastic (ndhF) (Agrostis stolonifera (Creeping bentgrass)).